Here is a 131-residue protein sequence, read N- to C-terminus: Synaptobrevin-like protein (131 aa).

At 1-81 (MLHITTMTDK…KRKFWWKNCK (81 aa)) the chain is on the cytoplasmic side. The 61-residue stretch at 18–78 (RLQQTQAQVN…GKLKRKFWWK (61 aa)) folds into the v-SNARE coiled-coil homology domain. The chain crosses the membrane as a helical; Anchor for type IV membrane protein span at residues 82 to 102 (MLAVLGVLVVILIIVLIVWVV). Topologically, residues 103 to 131 (SEQKNKVEQSEHSSHHLVMDNSSHLLSEQ) are vesicular. The interval 112-131 (SEHSSHHLVMDNSSHLLSEQ) is disordered. Residues 122 to 131 (DNSSHLLSEQ) are compositionally biased toward polar residues.

Belongs to the synaptobrevin family.

The protein localises to the cytoplasmic vesicle. It is found in the secretory vesicle. Its subcellular location is the synaptic vesicle membrane. It localises to the synapse. The protein resides in the synaptosome. Functionally, unknown, but synaptobrevins are presumed to be involved in targeting and fusion of synaptic vesicles with the presynaptic membrane as well as in neurotransmitter release. This Schistosoma mansoni (Blood fluke) protein is Synaptobrevin-like protein.